Here is a 317-residue protein sequence, read N- to C-terminus: Fe-S cluster assembly protein DRE2 (317 aa).

An N-terminal SAM-like domain region spans residues 1-131 (MERMLFLSPP…KPNFGAQDTV (131 aa)). The interval 132-209 (PLKLGKKKKA…EEALMDEEDM (78 aa)) is linker. The [2Fe-2S] cluster site is built by Cys219, Cys230, Cys233, and Cys235. The interval 219–235 (CRPKAGKRRRACKDCTC) is fe-S binding site A. Positions 280, 283, 291, and 294 each coordinate [4Fe-4S] cluster. Short sequence motifs (cx2C motif) lie at residues 280-283 (CGNC) and 291-294 (CDGC). Residues 280–294 (CGNCALGDAFRCDGC) are fe-S binding site B.

Belongs to the anamorsin family. In terms of assembly, monomer. Interacts with TAH18. Interacts with MIA40. It depends on [2Fe-2S] cluster as a cofactor. Requires [4Fe-4S] cluster as cofactor.

It localises to the cytoplasm. It is found in the mitochondrion intermembrane space. Functionally, component of the cytosolic iron-sulfur (Fe-S) protein assembly (CIA) machinery required for the maturation of extramitochondrial Fe-S proteins. Part of an electron transfer chain functioning in an early step of cytosolic Fe-S biogenesis, facilitating the de novo assembly of a [4Fe-4S] cluster on the scaffold complex CFD1-NBP35. Electrons are transferred to DRE2 from NADPH via the FAD- and FMN-containing protein TAH18. TAH18-DRE2 are also required for the assembly of the diferric tyrosyl radical cofactor of ribonucleotide reductase (RNR), probably by providing electrons for reduction during radical cofactor maturation in the catalytic small subunit RNR2. The chain is Fe-S cluster assembly protein DRE2 from Uncinocarpus reesii (strain UAMH 1704).